A 275-amino-acid polypeptide reads, in one-letter code: 4-hydroxy-tetrahydrodipicolinate reductase (275 aa).

Residues 13-18 (GAAGKM), 108-110 (GTT), and 134-137 (VPNF) each bind NAD(+). The Proton donor/acceptor role is filled by His164. His165 is a (S)-2,3,4,5-tetrahydrodipicolinate binding site. Residue Lys168 is the Proton donor of the active site. 174–175 (GT) is a binding site for (S)-2,3,4,5-tetrahydrodipicolinate.

This sequence belongs to the DapB family.

It localises to the cytoplasm. The catalysed reaction is (S)-2,3,4,5-tetrahydrodipicolinate + NAD(+) + H2O = (2S,4S)-4-hydroxy-2,3,4,5-tetrahydrodipicolinate + NADH + H(+). It carries out the reaction (S)-2,3,4,5-tetrahydrodipicolinate + NADP(+) + H2O = (2S,4S)-4-hydroxy-2,3,4,5-tetrahydrodipicolinate + NADPH + H(+). It participates in amino-acid biosynthesis; L-lysine biosynthesis via DAP pathway; (S)-tetrahydrodipicolinate from L-aspartate: step 4/4. In terms of biological role, catalyzes the conversion of 4-hydroxy-tetrahydrodipicolinate (HTPA) to tetrahydrodipicolinate. The sequence is that of 4-hydroxy-tetrahydrodipicolinate reductase from Gloeothece citriformis (strain PCC 7424) (Cyanothece sp. (strain PCC 7424)).